The following is a 207-amino-acid chain: Large ribosomal subunit protein uL4 (207 aa).

The tract at residues 50–76 (KTKTVSEVSGTTKKPFKQKGTGNARQG) is disordered.

The protein belongs to the universal ribosomal protein uL4 family. As to quaternary structure, part of the 50S ribosomal subunit.

Its function is as follows. One of the primary rRNA binding proteins, this protein initially binds near the 5'-end of the 23S rRNA. It is important during the early stages of 50S assembly. It makes multiple contacts with different domains of the 23S rRNA in the assembled 50S subunit and ribosome. In terms of biological role, forms part of the polypeptide exit tunnel. The polypeptide is Large ribosomal subunit protein uL4 (Rickettsia canadensis (strain McKiel)).